Here is a 118-residue protein sequence, read N- to C-terminus: uncharacterized protein (118 aa).

3 helical membrane-spanning segments follow: residues 6 to 26 (ILIL…PFMV), 43 to 63 (ALSC…IHVL), and 84 to 104 (IFKV…VLVQ).

Belongs to the AzlD/HI_1737/HP1330 family.

The protein localises to the cell membrane. This is an uncharacterized protein from Helicobacter pylori (strain J99 / ATCC 700824) (Campylobacter pylori J99).